The primary structure comprises 519 residues: Bifunctional purine biosynthesis protein PurH (519 aa).

Residues Met-1–Val-145 enclose the MGS-like domain.

The protein belongs to the PurH family.

The enzyme catalyses (6R)-10-formyltetrahydrofolate + 5-amino-1-(5-phospho-beta-D-ribosyl)imidazole-4-carboxamide = 5-formamido-1-(5-phospho-D-ribosyl)imidazole-4-carboxamide + (6S)-5,6,7,8-tetrahydrofolate. It catalyses the reaction IMP + H2O = 5-formamido-1-(5-phospho-D-ribosyl)imidazole-4-carboxamide. Its pathway is purine metabolism; IMP biosynthesis via de novo pathway; 5-formamido-1-(5-phospho-D-ribosyl)imidazole-4-carboxamide from 5-amino-1-(5-phospho-D-ribosyl)imidazole-4-carboxamide (10-formyl THF route): step 1/1. It participates in purine metabolism; IMP biosynthesis via de novo pathway; IMP from 5-formamido-1-(5-phospho-D-ribosyl)imidazole-4-carboxamide: step 1/1. The chain is Bifunctional purine biosynthesis protein PurH from Allochromatium vinosum (strain ATCC 17899 / DSM 180 / NBRC 103801 / NCIMB 10441 / D) (Chromatium vinosum).